The primary structure comprises 353 residues: Paraneoplastic antigen Ma1 homolog (353 aa).

The protein belongs to the PNMA family. As to expression, predominantly expressed in testis. Very low levels in the brain, including in the piriform cortex, hippocampus and some subcortical nuclei.

The protein resides in the nucleus. It localises to the nucleolus. The polypeptide is Paraneoplastic antigen Ma1 homolog (Pnma1) (Mus musculus (Mouse)).